Here is a 392-residue protein sequence, read N- to C-terminus: Alkaline phosphatase L (392 aa).

Positions 1–23 (MYKRSLIAASLSVAALVSAQAMA) are cleaved as a signal peptide.

It belongs to the PstS family. In terms of assembly, homodimer.

Its subcellular location is the secreted. It localises to the periplasm. The catalysed reaction is a phosphate monoester + H2O = an alcohol + phosphate. Its function is as follows. Has both a phosphomonoesterase and phosphodiesterase activity. This Pseudomonas aeruginosa protein is Alkaline phosphatase L.